A 344-amino-acid polypeptide reads, in one-letter code: Heat-inducible transcription repressor hrcA (344 aa).

The protein belongs to the HrcA family.

In terms of biological role, negative regulator of class I heat shock genes (grpE-dnaK-dnaJ and groELS operons). Prevents heat-shock induction of these operons. This chain is Heat-inducible transcription repressor hrcA, found in Streptococcus pyogenes serotype M3 (strain ATCC BAA-595 / MGAS315).